The chain runs to 397 residues: Putative gustatory receptor 93c (397 aa).

Residues 1–12 (MIERLKKVSLPA) lie on the Cytoplasmic side of the membrane. Residues 13–33 (LSAFILFCSCHYGRILGVICF) traverse the membrane as a helical segment. The Extracellular portion of the chain corresponds to 34-87 (DIGQRTSDDSLVVRNRHQFKWFCLSCRLISVTAVCCFCAPYVADIEDPYERLLQ). A helical transmembrane segment spans residues 88–108 (CFRLSASLICGICIIVVQVCY). At 109 to 141 (EKELLRMIISFLRLFRRVRRLSSLKRIGFGGKR) the chain is on the cytoplasmic side. The helical transmembrane segment at 142–162 (EFFLLLFKFICLVYELYSEIC) threads the bilayer. Topologically, residues 163–179 (QLWHLPDSLSLFATLCE) are extracellular. Residues 180–200 (IFLEIGSLMIIHIGFVGYLSV) traverse the membrane as a helical segment. Over 201–266 (AALYSEVNSF…RTFHRLLELP (66 aa)) the chain is Cytoplasmic. A helical membrane pass occupies residues 267-287 (VLIILLGKIFATTILSYEVII). Over 288–295 (RPELYARK) the chain is Extracellular. The helical transmembrane segment at 296-316 (IGMWGLVVKSFADVILLTLAV) threads the bilayer. At 317–371 (HEAVSSSRMMRRLSLENFPITDHKAWHMKWEMFLSRLNFFEFRVRPLGLFEVSNE) the chain is on the cytoplasmic side. The chain crosses the membrane as a helical span at residues 372–392 (VILLFLSSMITYFTYVVQYGI). The Extracellular portion of the chain corresponds to 393–397 (QTNRL).

Belongs to the insect chemoreceptor superfamily. Gustatory receptor (GR) family. Gr93a subfamily. In terms of tissue distribution, in larvae, is expressed in neurons of the posterior pharyngeal sense organ.

It is found in the cell membrane. Its function is as follows. Probable gustatory receptor which mediates acceptance or avoidance behavior, depending on its substrates. The protein is Putative gustatory receptor 93c (Gr93c) of Drosophila melanogaster (Fruit fly).